Consider the following 372-residue polypeptide: Dof zinc finger protein DOF5.6 (372 aa).

A Dof-type zinc finger spans residues 73 to 127 (QKCPRCESTHTKFCYYNNYSLSQPRYFCKTCRRYWTKGGTLRNIPVGGGCRKNKK). Cys75, Cys78, Cys100, and Cys103 together coordinate Zn(2+). Residues 117–146 (PVGGGCRKNKKPSSSNSSSSTSSGKKPSNI) are disordered. Residues 128 to 145 (PSSSNSSSSTSSGKKPSN) show a composition bias toward low complexity.

The PEAR proteins (e.g. DOF2.4, DOF5.1, DOF3.2, DOF1.1, DOF5.6 and DOF5.3) form a short-range concentration gradient that peaks at protophloem sieve elements (PSE). Preferentially expressed in the vasculature of all organs, including seedlings, roots, stems, buds, leaves, flowers and siliques, and particularly in the cambium, phloem and interfascicular parenchyma cells of inflorescence stems.

Its subcellular location is the nucleus. Transcription factor that binds specifically to a 5'-AA[AG]G-3' consensus core sequence. Promotes expression. The PEAR proteins (e.g. DOF2.4, DOF5.1, DOF3.2, DOF1.1, DOF5.6 and DOF5.3) activate gene expression that promotes radial growth of protophloem sieve elements. Involved in the regulation of interfascicular cambium formation and vascular tissue development, particularly at a very early stage during inflorescence stem development; promotes both cambium activity and phloem specification, but prevents xylem specification. The polypeptide is Dof zinc finger protein DOF5.6 (Arabidopsis thaliana (Mouse-ear cress)).